The sequence spans 155 residues: Putative pre-16S rRNA nuclease (155 aa).

This sequence belongs to the YqgF nuclease family.

It localises to the cytoplasm. Functionally, could be a nuclease involved in processing of the 5'-end of pre-16S rRNA. The polypeptide is Putative pre-16S rRNA nuclease (Wolbachia sp. subsp. Brugia malayi (strain TRS)).